A 155-amino-acid chain; its full sequence is 3-dehydroquinate dehydratase (155 aa).

Residue Tyr-32 is the Proton acceptor of the active site. Substrate is bound by residues Asn-84, His-90, and Asp-97. The active-site Proton donor is the His-110. Substrate contacts are provided by residues 111–112 (LS) and Arg-121.

Belongs to the type-II 3-dehydroquinase family. As to quaternary structure, homododecamer.

The catalysed reaction is 3-dehydroquinate = 3-dehydroshikimate + H2O. It functions in the pathway metabolic intermediate biosynthesis; chorismate biosynthesis; chorismate from D-erythrose 4-phosphate and phosphoenolpyruvate: step 3/7. Catalyzes a trans-dehydration via an enolate intermediate. This chain is 3-dehydroquinate dehydratase, found in Ralstonia pickettii (strain 12J).